A 189-amino-acid polypeptide reads, in one-letter code: dTTP/UTP pyrophosphatase (189 aa).

Asp70 (proton acceptor) is an active-site residue. A disulfide bridge links Cys74 with Cys79.

Belongs to the Maf family. YhdE subfamily. In terms of assembly, homodimer. A divalent metal cation serves as cofactor.

Its subcellular location is the cytoplasm. It carries out the reaction dTTP + H2O = dTMP + diphosphate + H(+). The enzyme catalyses UTP + H2O = UMP + diphosphate + H(+). It catalyses the reaction CTP + H2O = CMP + diphosphate + H(+). The catalysed reaction is psi-UTP + H2O = psi-UMP + diphosphate + H(+). It carries out the reaction 5-methyl-CTP + H2O = 5-methyl-CMP + diphosphate + H(+). The enzyme catalyses 5-methyl-UTP + H2O = 5-methyl-UMP + diphosphate + H(+). Nucleoside triphosphate pyrophosphatase that hydrolyzes dTTP and UTP. Can also hydrolyze CTP and the modified nucleotides pseudo-UTP, 5-methyl-CTP (m(5)CTP) and 5-methyl-UTP (m(5)UTP). May have a dual role in cell division arrest and in preventing the incorporation of modified nucleotides into cellular nucleic acids. This chain is dTTP/UTP pyrophosphatase, found in Bacillus subtilis (strain 168).